The following is a 333-amino-acid chain: DNA-directed RNA polymerase subunit alpha (333 aa).

The segment at 1–234 (MQSSVNEFLT…QQLAAFVDLK (234 aa)) is alpha N-terminal domain (alpha-NTD). An alpha C-terminal domain (alpha-CTD) region spans residues 248 to 333 (IDPILLRPVD…SLKKDDKATA (86 aa)).

It belongs to the RNA polymerase alpha chain family. As to quaternary structure, homodimer. The RNAP catalytic core consists of 2 alpha, 1 beta, 1 beta' and 1 omega subunit. When a sigma factor is associated with the core the holoenzyme is formed, which can initiate transcription.

It catalyses the reaction RNA(n) + a ribonucleoside 5'-triphosphate = RNA(n+1) + diphosphate. Functionally, DNA-dependent RNA polymerase catalyzes the transcription of DNA into RNA using the four ribonucleoside triphosphates as substrates. The chain is DNA-directed RNA polymerase subunit alpha from Pseudomonas putida (Arthrobacter siderocapsulatus).